A 159-amino-acid polypeptide reads, in one-letter code: uncharacterized protein (159 aa).

The interval 1 to 139 is disordered; sequence MSRRAPGSRL…RKSQERSMSY (139 aa). The span at 9–31 shows a compositional bias: polar residues; sequence RLSSGGTNYSRSWNDWQPRTDSA. Basic and acidic residues predominate over residues 65–82; it reads QRHDDTRVHADIQNDEKG. The span at 105-119 shows a compositional bias: polar residues; sequence RVNNVTSPEFTSVQH. Over residues 125–134 the composition is skewed to basic and acidic residues; sequence ATKDMRKSQE.

This is an uncharacterized protein from Homo sapiens (Human).